The sequence spans 193 residues: NADH-quinone oxidoreductase subunit B (193 aa).

Positions 72, 73, 137, and 167 each coordinate [4Fe-4S] cluster.

It belongs to the complex I 20 kDa subunit family. As to quaternary structure, NDH-1 is composed of 14 different subunits. Subunits NuoB, C, D, E, F, and G constitute the peripheral sector of the complex. [4Fe-4S] cluster is required as a cofactor.

It is found in the cell inner membrane. The catalysed reaction is a quinone + NADH + 5 H(+)(in) = a quinol + NAD(+) + 4 H(+)(out). Functionally, NDH-1 shuttles electrons from NADH, via FMN and iron-sulfur (Fe-S) centers, to quinones in the respiratory chain. The immediate electron acceptor for the enzyme in this species is believed to be ubiquinone. Couples the redox reaction to proton translocation (for every two electrons transferred, four hydrogen ions are translocated across the cytoplasmic membrane), and thus conserves the redox energy in a proton gradient. The chain is NADH-quinone oxidoreductase subunit B from Rhizobium rhizogenes (strain K84 / ATCC BAA-868) (Agrobacterium radiobacter).